The primary structure comprises 192 residues: Ornithine lipid N-methyltransferase (192 aa).

This sequence belongs to the methyltransferase superfamily.

The enzyme catalyses an N(2)-[(3R)-3-(2-saturated-acyloxy)acyl]-L-ornithine lipid + 3 S-adenosyl-L-methionine = an N,N,N-trimethylornithine lipid + 3 S-adenosyl-L-homocysteine + 3 H(+). Catalyzes the 3-fold methylation of ornithine lipids. Forms ornithine lipids that are mono-, di-, and trimethylated on the delta-nitrogen of the ornithine head group. This is Ornithine lipid N-methyltransferase from Singulisphaera acidiphila (strain ATCC BAA-1392 / DSM 18658 / VKM B-2454 / MOB10).